Here is a 304-residue protein sequence, read N- to C-terminus: Glycine--tRNA ligase alpha subunit (304 aa).

Belongs to the class-II aminoacyl-tRNA synthetase family. In terms of assembly, tetramer of two alpha and two beta subunits.

The protein localises to the cytoplasm. The catalysed reaction is tRNA(Gly) + glycine + ATP = glycyl-tRNA(Gly) + AMP + diphosphate. In Serratia proteamaculans (strain 568), this protein is Glycine--tRNA ligase alpha subunit.